The following is a 411-amino-acid chain: Bifunctional protein GlmU (411 aa).

The tract at residues 1–204 (MDAIILCAGK…NGKLHGIELN (204 aa)) is pyrophosphorylase. UTP contacts are provided by residues 6 to 9 (LCAG), glutamine 74, and glycine 79. N-acetyl-alpha-D-glucosamine 1-phosphate-binding residues include threonine 80, glycine 130, asparagine 142, and asparagine 158. Residues 205 to 224 (GYWNDIGHPWDVLSANNRFL) form a linker region. An N-acetyltransferase region spans residues 225–411 (NKIISKVSGK…DELVITKKRN (187 aa)). Catalysis depends on histidine 308, which acts as the Proton acceptor. Acetyl-CoA is bound by residues alanine 384 and lysine 401.

In the N-terminal section; belongs to the N-acetylglucosamine-1-phosphate uridyltransferase family. The protein in the C-terminal section; belongs to the transferase hexapeptide repeat family.

The catalysed reaction is N-acetyl-alpha-D-glucosamine 1-phosphate + UTP + H(+) = UDP-N-acetyl-alpha-D-glucosamine + diphosphate. It catalyses the reaction alpha-D-glucosamine 1-phosphate + acetyl-CoA = N-acetyl-alpha-D-glucosamine 1-phosphate + CoA + H(+). It participates in nucleotide-sugar biosynthesis; UDP-N-acetyl-alpha-D-glucosamine biosynthesis; N-acetyl-alpha-D-glucosamine 1-phosphate from alpha-D-glucosamine 6-phosphate (route II): step 2/2. Its pathway is nucleotide-sugar biosynthesis; UDP-N-acetyl-alpha-D-glucosamine biosynthesis; UDP-N-acetyl-alpha-D-glucosamine from N-acetyl-alpha-D-glucosamine 1-phosphate: step 1/1. Functionally, catalyzes the last two sequential reactions in the de novo biosynthetic pathway for UDP-N-acetyl-glucosamine (UDP-GlcNAc). Responsible for the acetylation of GlcN-1-P to GlcNAc-1-P, and for the uridyl transfer from UTP to GlcNAc-1-P, to produce UDP-GlcNAc and pyrophosphate. The sequence is that of Bifunctional protein GlmU from Methanococcus maripaludis (strain C7 / ATCC BAA-1331).